Here is a 246-residue protein sequence, read N- to C-terminus: Orotidine 5'-phosphate decarboxylase (246 aa).

Substrate contacts are provided by residues Asp-22, Lys-44, 71-80 (DLKYHDIPHT), Thr-130, Arg-191, Gln-201, Gly-221, and Arg-222. Residue Lys-73 is the Proton donor of the active site.

This sequence belongs to the OMP decarboxylase family. Type 1 subfamily. In terms of assembly, homodimer.

It catalyses the reaction orotidine 5'-phosphate + H(+) = UMP + CO2. Its pathway is pyrimidine metabolism; UMP biosynthesis via de novo pathway; UMP from orotate: step 2/2. In terms of biological role, catalyzes the decarboxylation of orotidine 5'-monophosphate (OMP) to uridine 5'-monophosphate (UMP). This Neisseria meningitidis serogroup B (strain ATCC BAA-335 / MC58) protein is Orotidine 5'-phosphate decarboxylase.